Reading from the N-terminus, the 428-residue chain is ETS domain-containing protein Elk-1 (428 aa).

Positions 5–86 form a DNA-binding region, ETS; sequence VTLWQFLLQL…SGQKFVYKFV (82 aa). 3 disordered regions span residues 121 to 149, 165 to 205, and 228 to 358; these read AAPG…ARSS, QSLQ…SPLE, and NLKS…SLLP. Over residues 177 to 205 the composition is skewed to low complexity; the sequence is PAVVLPSAAPAGAAAPPSGSRSTSPSPLE. Residues lysine 230, lysine 249, and lysine 254 each participate in a glycyl lysine isopeptide (Lys-Gly) (interchain with G-Cter in SUMO) cross-link. The span at 248–261 shows a compositional bias: basic and acidic residues; that stretch reads VKVEGPKEELEVAG. A Phosphoserine; by MAPK1 modification is found at serine 324. Phosphothreonine; by MAPK1 is present on residues threonine 336, threonine 353, threonine 363, and threonine 368. Residues 349 to 399 are sufficient for interaction with MAD2L2; the sequence is GPALTPSLLPTHTLTPVLLTPSSLPPSIHFWSTLSPIAPRSPAKLSFQFPS. Threonine 381 is a glycosylation site (O-linked (GlcNAc) threonine). Phosphoserine; by MAPK1 and MAPK8 is present on serine 383. Serine 389 bears the Phosphoserine; by MAPK1 mark. Threonine 417 is modified (phosphothreonine; by MAPK1). Serine 422 bears the Phosphoserine; by MAPK1 mark.

This sequence belongs to the ETS family. In terms of assembly, interacts in its sumoylated form with PIAS2/PIASX which enhances its transcriptional activator activity. Interacts with MAD2L2; the interaction is direct and promotes phosphorylation by the kinases MAPK8 and/or MAPK9. Interacts with POU1F1. Sumoylation represses transcriptional activator activity as it results in recruitment of HDAC2 to target gene promoters which leads to decreased histone acetylation and reduced transactivator activity. It also regulates nuclear retention. Post-translationally, on mitogenic stimulation, phosphorylated on C-terminal serine and threonine residues by MAPK1. Ser-383 and Ser-389 are the preferred sites for MAPK1. In vitro, phosphorylation by MAPK1 potentiates ternary complex formation with the serum responses factors, SRE and SRF. Also phosphorylated on Ser-383 by MAPK8 and/or MAKP9. Phosphorylation leads to loss of sumoylation and restores transcriptional activator activity. Phosphorylated and activated by CAMK4, MAPK11, MAPK12 and MAPK14. Upon bFGF stimulus, phosphorylated by PAK1. Phosphorylated by PRP4K at Thr-417; phosphorylation activation ELK1 transcriptional activity. As to expression, lung and testis.

The protein localises to the nucleus. Functionally, transcription factor that binds to purine-rich DNA sequences. Forms a ternary complex with SRF and the ETS and SRF motifs of the serum response element (SRE) on the promoter region of immediate early genes such as FOS and IER2. Induces target gene transcription upon JNK and MAPK-signaling pathways stimulation. This chain is ETS domain-containing protein Elk-1, found in Homo sapiens (Human).